A 1858-amino-acid chain; its full sequence is Inactive histone-lysine N-methyltransferase 2E (1858 aa).

The HCFC1-binding motif (HBM) signature appears at 63–66 (DHNY). Residues 118–166 (VTRCICGFTHDDGYMICCDKCSVWQHIDCMGIDRQHIPDTYLCERCQPR) form a PHD-type zinc finger. Residues cysteine 121, cysteine 123, cysteine 135, cysteine 138, histidine 143, cysteine 146, cysteine 160, and cysteine 163 each contribute to the Zn(2+) site. A disordered region spans residues 217 to 269 (ASRVSKVNDKRRKKSGEKEQHISKCKKAFREGSRKSSRVKGSAPEIDPSSDGS). Residues 232–250 (GEKEQHISKCKKAFREGSR) show a composition bias toward basic and acidic residues. The SET domain maps to 330–447 (PPVESHIQKN…KGTEITIAFD (118 aa)). Serine 435 is a glycosylation site (O-linked (GlcNAc) serine). O-linked (GlcNAc) threonine glycosylation is present at threonine 440. A disordered region spans residues 475–530 (SESMENINSGYETRRKKGKKDKDISKEKDTQNQNITLDCEGTTNKMKSPETKQRKL). Positions 494–504 (KDKDISKEKDT) are enriched in basic and acidic residues. The segment covering 505 to 520 (QNQNITLDCEGTTNKM) has biased composition (polar residues). Positions 559-615 (VEMESEEQIAERKRKMTREERKMEAILQAFARLEKREKRREQALERISTAKTEVKTE) form a coiled coil. Serine 623 is subject to Phosphoserine. A disordered region spans residues 630 to 687 (EQAKEENASKPTPAKVNRTKQRKSFSRSRTHIGQQRRRHRTVSMCSDIQPSSPDIEVT). Residues 646–670 (NRTKQRKSFSRSRTHIGQQRRRHRT) are compositionally biased toward basic residues. Residues 672-687 (SMCSDIQPSSPDIEVT) show a composition bias toward polar residues. Phosphoserine is present on residues serine 837 and serine 845. Composition is skewed to low complexity over residues 887–901 (TSTP…PTHT) and 933–957 (PVTP…PESS). Disordered stretches follow at residues 887 to 960 (TSTP…SPEI) and 1039 to 1068 (LETP…SSWV). A compositionally biased stretch (basic and acidic residues) spans 1039-1048 (LETPAHDRAE). Residues 1049-1068 (PNSQLDSTHSGRGTMYSSWV) show a composition bias toward polar residues. Serine 1070 carries the post-translational modification Phosphoserine. Disordered regions lie at residues 1164-1561 (KRQR…QNQQ) and 1581-1835 (VFTS…PVPG). 2 stretches are compositionally biased toward polar residues: residues 1186–1206 (PHAS…NDNG) and 1222–1235 (TVYN…SNNC). The residue at position 1273 (serine 1273) is a Phosphoserine. Basic and acidic residues predominate over residues 1273 to 1282 (SDHRKDKDSG). Low complexity-rich tracts occupy residues 1285 to 1303 (SPCV…SSHS) and 1349 to 1362 (KSPP…SPGS). Serine 1359 carries the post-translational modification Phosphoserine. Polar residues-rich tracts occupy residues 1400 to 1432 (QQKQ…SQKL) and 1506 to 1542 (LPAN…LNST). Pro residues predominate over residues 1543–1553 (APPPPPPPPPS). Positions 1581–1599 (VFTSGPNQALPGTTSQQTV) are enriched in polar residues. The segment covering 1626–1637 (VPPPPPPPPAPG) has biased composition (pro residues). A compositionally biased stretch (polar residues) spans 1642-1651 (QQPNSHQQHS). Over residues 1677 to 1687 (LPPPPPPPGPA) the composition is skewed to pro residues. Positions 1698 to 1711 (TGLQGLQAQHQHVV) are enriched in polar residues. Pro residues predominate over residues 1714 to 1724 (APPPPPPPPPS). The span at 1798-1808 (QGPNSIPTPTA) shows a compositional bias: polar residues.

It belongs to the class V-like SAM-binding methyltransferase superfamily. Histone-lysine methyltransferase family. TRX/MLL subfamily. Component of a complex composed of KMT2E (isoform 3), OGT and USP7; the complex stabilizes KMT2E, preventing KMT2E ubiquitination and proteasomal-mediated degradation. Isoform 3 interacts (via N-terminus) with OGT (via TRP repeats). Isoform 3 interacts with deubiquitinating enzyme USP7 (via MATH domain). Isoform 3 interacts (via HBM motif) with HCFC1 (via Kelch domain). Isoform 3 interacts with E2F1; the interaction is probably indirect and is mediated via HCFC1. In terms of processing, ubiquitinated. Deubiquitinated by USP7. O-glycosylated at Ser-435 and Thr-440 in the SET domain by OGT which probably prevents KMT2E proteasomal-mediated degradation. As to expression, widely expressed in both adult and fetal tissues. Highest levels of expression observed in fetal thymus and kidney and in adult hematopoietic tissues, jejunum and cerebellum. Isoform NKp44L: Not detected on circulating cells from healthy individuals, but is expressed on a large panel of tumor and transformed cells.

The protein resides in the chromosome. Its subcellular location is the cytoplasm. It is found in the cytoskeleton. It localises to the microtubule organizing center. The protein localises to the centrosome. The protein resides in the nucleus speckle. Its subcellular location is the nucleus. It is found in the nucleoplasm. It localises to the cell membrane. Functionally, associates with chromatin regions downstream of transcriptional start sites of active genes and thus regulates gene transcription. Chromatin interaction is mediated via the binding to tri-methylated histone H3 at 'Lys-4' (H3K4me3). Key regulator of hematopoiesis involved in terminal myeloid differentiation and in the regulation of hematopoietic stem cell (HSCs) self-renewal by a mechanism that involves DNA methylation. Also acts as an important cell cycle regulator, participating in cell cycle regulatory network machinery at multiple cell cycle stages including G1/S transition, S phase progression and mitotic entry. Recruited to E2F1 responsive promoters by HCFC1 where it stimulates tri-methylation of histone H3 at 'Lys-4' and transcriptional activation and thereby facilitates G1 to S phase transition. During myoblast differentiation, required to suppress inappropriate expression of S-phase-promoting genes and maintain expression of determination genes in quiescent cells. In terms of biological role, cellular ligand for NCR2/NKp44, may play a role as a danger signal in cytotoxicity and NK-cell-mediated innate immunity. In Homo sapiens (Human), this protein is Inactive histone-lysine N-methyltransferase 2E (KMT2E).